Here is a 430-residue protein sequence, read N- to C-terminus: Enolase (430 aa).

Gln165 serves as a coordination point for (2R)-2-phosphoglycerate. Glu207 (proton donor) is an active-site residue. 3 residues coordinate Mg(2+): Asp244, Glu287, and Asp314. (2R)-2-phosphoglycerate is bound by residues Lys339, Arg368, Ser369, and Lys390. Lys339 serves as the catalytic Proton acceptor.

The protein belongs to the enolase family. Component of the RNA degradosome, a multiprotein complex involved in RNA processing and mRNA degradation. The cofactor is Mg(2+).

It localises to the cytoplasm. The protein localises to the secreted. The protein resides in the cell surface. It catalyses the reaction (2R)-2-phosphoglycerate = phosphoenolpyruvate + H2O. It participates in carbohydrate degradation; glycolysis; pyruvate from D-glyceraldehyde 3-phosphate: step 4/5. In terms of biological role, catalyzes the reversible conversion of 2-phosphoglycerate (2-PG) into phosphoenolpyruvate (PEP). It is essential for the degradation of carbohydrates via glycolysis. This is Enolase from Xylella fastidiosa (strain M23).